We begin with the raw amino-acid sequence, 303 residues long: Succinate--CoA ligase [ADP-forming] subunit alpha (303 aa).

Residues 20 to 23 (TGSE), Lys46, and 108 to 110 (ITE) contribute to the CoA site. Residue Tyr173 coordinates substrate. His259 serves as the catalytic Tele-phosphohistidine intermediate.

This sequence belongs to the succinate/malate CoA ligase alpha subunit family. As to quaternary structure, heterotetramer of two alpha and two beta subunits.

It catalyses the reaction succinate + ATP + CoA = succinyl-CoA + ADP + phosphate. The enzyme catalyses GTP + succinate + CoA = succinyl-CoA + GDP + phosphate. Its pathway is carbohydrate metabolism; tricarboxylic acid cycle; succinate from succinyl-CoA (ligase route): step 1/1. Succinyl-CoA synthetase functions in the citric acid cycle (TCA), coupling the hydrolysis of succinyl-CoA to the synthesis of either ATP or GTP and thus represents the only step of substrate-level phosphorylation in the TCA. The alpha subunit of the enzyme binds the substrates coenzyme A and phosphate, while succinate binding and nucleotide specificity is provided by the beta subunit. This chain is Succinate--CoA ligase [ADP-forming] subunit alpha, found in Mycobacterium bovis (strain ATCC BAA-935 / AF2122/97).